The following is a 121-amino-acid chain: Large ribosomal subunit protein uL3 (121 aa).

An N5-methylglutamine modification is found at Q62.

This sequence belongs to the universal ribosomal protein uL3 family. As to quaternary structure, part of the 50S ribosomal subunit. Forms a cluster with proteins L14 and L19. In terms of processing, methylated by PrmB.

Functionally, one of the primary rRNA binding proteins, it binds directly near the 3'-end of the 23S rRNA, where it nucleates assembly of the 50S subunit. The protein is Large ribosomal subunit protein uL3 (rplC) of Aggregatibacter actinomycetemcomitans (Actinobacillus actinomycetemcomitans).